Reading from the N-terminus, the 374-residue chain is Cell division protein DivIB (374 aa).

The interval Met-1–Pro-90 is disordered. At Met-1–Arg-103 the chain is on the cytoplasmic side. Positions Tyr-39–Asn-53 are enriched in basic and acidic residues. A compositionally biased stretch (polar residues) spans Ala-56–Pro-75. A helical transmembrane segment spans residues Leu-104 to Pro-124. The Extracellular segment spans residues Leu-125–Glu-374. The 72-residue stretch at Ser-126–Tyr-197 folds into the POTRA domain. Residues Lys-325–Glu-374 are disordered. A compositionally biased stretch (acidic residues) spans Glu-326 to Ala-339. Residues Glu-356 to Glu-374 are compositionally biased toward polar residues.

This sequence belongs to the FtsQ/DivIB family. DivIB subfamily.

The protein localises to the cell membrane. Cell division protein that may be involved in stabilizing or promoting the assembly of the division complex. The sequence is that of Cell division protein DivIB from Enterococcus faecalis (strain ATCC 700802 / V583).